The following is a 537-amino-acid chain: Periplasmic murein peptide-binding protein MppA (537 aa).

Residues 1–22 form the signal peptide; that stretch reads MKHSVSVTCCALLVSSISLSYA. The L-alanyl-gamma-D-glutamyl-meso-2,6-diaminopimelate site is built by K42, V54, L56, Q289, R424, S435, V437, D439, and T506.

This sequence belongs to the bacterial solute-binding protein 5 family. The complex is composed of two ATP-binding proteins (OppD and OppF), two transmembrane proteins (OppB and OppC) and a solute-binding protein (MppA).

It is found in the periplasm. Functionally, part of the ABC transporter complex MppA-OppBCDF involved in the uptake of the cell wall murein tripeptide L-alanyl-gamma-D-glutamyl-meso-diaminopimelate. Is involved in the recycling of cell wall peptides. Binds the cell wall peptide L-Ala-D-Gly-gamma-meso-diaminopimelic acid. Can also transport ordinary alpha-linked tripeptides such as Pro-Phe-Lys, but with much lower efficiency than OppA. Cannot bind typical tripeptides such as Lys-Glu-Lys, Lys-Lys-Lys or Ala-Ala-Ala. This Escherichia coli (strain K12) protein is Periplasmic murein peptide-binding protein MppA.